A 144-amino-acid chain; its full sequence is Sentan (144 aa).

Positions 1–31 (MCGCRASVPSTKHYSVNPAPTTRSPPAAAGM) are disordered. The span at 18-29 (PAPTTRSPPAAA) shows a compositional bias: low complexity.

Belongs to the S-100 family.

It localises to the cell projection. Its subcellular location is the cilium. Its function is as follows. May be a component of the linker structure that bridges the ciliary membrane and peripheral singlet microtubules. In Gallus gallus (Chicken), this protein is Sentan.